Reading from the N-terminus, the 441-residue chain is NADH-quinone oxidoreductase subunit D 1 (441 aa).

This sequence belongs to the complex I 49 kDa subunit family. In terms of assembly, NDH-1 is composed of 14 different subunits. Subunits NuoB, C, D, E, F, and G constitute the peripheral sector of the complex.

Its subcellular location is the cell membrane. It carries out the reaction a quinone + NADH + 5 H(+)(in) = a quinol + NAD(+) + 4 H(+)(out). NDH-1 shuttles electrons from NADH, via FMN and iron-sulfur (Fe-S) centers, to quinones in the respiratory chain. The immediate electron acceptor for the enzyme in this species is believed to be a menaquinone. Couples the redox reaction to proton translocation (for every two electrons transferred, four hydrogen ions are translocated across the cytoplasmic membrane), and thus conserves the redox energy in a proton gradient. The protein is NADH-quinone oxidoreductase subunit D 1 of Salinispora arenicola (strain CNS-205).